The primary structure comprises 380 residues: Anhydro-N-acetylmuramic acid kinase (380 aa).

Position 17–24 (17–24 (GTSMDGAD)) interacts with ATP.

It belongs to the anhydro-N-acetylmuramic acid kinase family.

The enzyme catalyses 1,6-anhydro-N-acetyl-beta-muramate + ATP + H2O = N-acetyl-D-muramate 6-phosphate + ADP + H(+). It functions in the pathway amino-sugar metabolism; 1,6-anhydro-N-acetylmuramate degradation. It participates in cell wall biogenesis; peptidoglycan recycling. Its function is as follows. Catalyzes the specific phosphorylation of 1,6-anhydro-N-acetylmuramic acid (anhMurNAc) with the simultaneous cleavage of the 1,6-anhydro ring, generating MurNAc-6-P. Is required for the utilization of anhMurNAc either imported from the medium or derived from its own cell wall murein, and thus plays a role in cell wall recycling. This chain is Anhydro-N-acetylmuramic acid kinase, found in Cupriavidus metallidurans (strain ATCC 43123 / DSM 2839 / NBRC 102507 / CH34) (Ralstonia metallidurans).